The chain runs to 550 residues: Chaperonin GroEL (550 aa).

ATP is bound by residues 30 to 33 (TLGP), lysine 51, 87 to 91 (DGTTT), glycine 415, 478 to 480 (NAA), and aspartate 494.

Belongs to the chaperonin (HSP60) family. As to quaternary structure, forms a cylinder of 14 subunits composed of two heptameric rings stacked back-to-back. Interacts with the co-chaperonin GroES.

The protein resides in the cytoplasm. The catalysed reaction is ATP + H2O + a folded polypeptide = ADP + phosphate + an unfolded polypeptide.. Together with its co-chaperonin GroES, plays an essential role in assisting protein folding. The GroEL-GroES system forms a nano-cage that allows encapsulation of the non-native substrate proteins and provides a physical environment optimized to promote and accelerate protein folding. The chain is Chaperonin GroEL from Desulfosudis oleivorans (strain DSM 6200 / JCM 39069 / Hxd3) (Desulfococcus oleovorans).